A 278-amino-acid chain; its full sequence is Sulfur carrier protein FdhD (278 aa).

C121 functions as the Cysteine persulfide intermediate in the catalytic mechanism. A Mo-bis(molybdopterin guanine dinucleotide)-binding site is contributed by 260 to 265 (FCKPGR).

Belongs to the FdhD family.

It localises to the cytoplasm. Functionally, required for formate dehydrogenase (FDH) activity. Acts as a sulfur carrier protein that transfers sulfur from IscS to the molybdenum cofactor prior to its insertion into FDH. In Salmonella schwarzengrund (strain CVM19633), this protein is Sulfur carrier protein FdhD.